Consider the following 1044-residue polypeptide: Integrin alpha-8 (1044 aa).

The N-terminal stretch at 1-23 (MPRRQPPRPLLLLSALLCAPASA) is a signal peptide. Residues 24–991 (FNLDEEKLTV…WSTPNVSFVI (968 aa)) lie on the Extracellular side of the membrane. FG-GAP repeat units follow at residues 28 to 90 (EEKL…RCRQ), 104 to 165 (NGTR…AYAE), 170 to 222 (RNSN…ITNY), 236 to 288 (QTGV…SSDL), 289 to 354 (TFIQ…FLFR), 355 to 413 (DPQI…GLKT), and 417 to 480 (QVLN…LNPM). N-linked (GlcNAc...) asparagine glycosylation is present at Asn-66. Residues Cys-81 and Cys-88 are joined by a disulfide bond. N-linked (GlcNAc...) asparagine glycosylation occurs at Asn-104. Residues Cys-132 and Cys-153 are joined by a disulfide bond. N-linked (GlcNAc...) asparagine glycosylation occurs at Asn-159. A disulfide bridge links Cys-169 with Cys-182. Asn-221 carries N-linked (GlcNAc...) asparagine glycosylation. Residues Glu-257, Thr-259, Asp-261, and Glu-265 each contribute to the Ca(2+) site. Residues Asn-284 and Asn-293 are each glycosylated (N-linked (GlcNAc...) asparagine). Ca(2+) contacts are provided by Asp-311, Asn-313, Asp-315, Leu-317, Asp-319, Asp-377, Asn-379, Asp-381, Tyr-383, and Asp-385. The Cell attachment site signature appears at 437 to 439 (RGD). Residues Asp-441, Asp-443, Asn-445, Tyr-447, and Asp-449 each contribute to the Ca(2+) site. Residue Asn-486 is glycosylated (N-linked (GlcNAc...) asparagine). Disulfide bonds link Cys-489/Cys-500 and Cys-506/Cys-562. Asn-587 carries N-linked (GlcNAc...) asparagine glycosylation. 2 disulfides stabilise this stretch: Cys-623–Cys-629 and Cys-695–Cys-708. 7 N-linked (GlcNAc...) asparagine glycosylation sites follow: Asn-701, Asn-719, Asn-751, Asn-762, Asn-818, Asn-877, and Asn-904. 2 cysteine pairs are disulfide-bonded: Cys-849/Cys-905 and Cys-910/Cys-915. 2 N-linked (GlcNAc...) asparagine glycosylation sites follow: Asn-952 and Asn-986. The chain crosses the membrane as a helical span at residues 992–1015 (PLWVIILAIMLGLLVLAVLTLALW). The Cytoplasmic segment spans residues 1016–1044 (KCGFFDRARPPQDDMADREQLTNNKTTDA).

Belongs to the integrin alpha chain family. As to quaternary structure, heterodimer of an alpha and a beta subunit. The alpha subunit is composed of a heavy and a light chain linked by a disulfide bond. Alpha-8 associates with beta-1. In terms of tissue distribution, prominently expressed on axons and on cells in contact with basal laminae in embryos.

The protein localises to the membrane. It is found in the cell membrane. Functionally, integrin alpha-8/beta-1 functions in the genesis of kidney and probably of other organs by regulating the recruitment of mesenchymal cells into epithelial structures. It recognizes the sequence R-G-D in a wide array of ligands including TNC, FN1, SPP1, TGFB1, TGFB3 and VTN. NPNT is probably its functional ligand in kidney genesis. Neuronal receptor for TNC it mediates cell-cell interactions and regulates neurite outgrowth of sensory and motor neurons. This is Integrin alpha-8 (ITGA8) from Gallus gallus (Chicken).